Reading from the N-terminus, the 119-residue chain is Large ribosomal subunit protein bL20 (119 aa).

The protein belongs to the bacterial ribosomal protein bL20 family.

Binds directly to 23S ribosomal RNA and is necessary for the in vitro assembly process of the 50S ribosomal subunit. It is not involved in the protein synthesizing functions of that subunit. This is Large ribosomal subunit protein bL20 from Acidovorax sp. (strain JS42).